A 91-amino-acid chain; its full sequence is Probable Fe(2+)-trafficking protein (91 aa).

This sequence belongs to the Fe(2+)-trafficking protein family.

Its function is as follows. Could be a mediator in iron transactions between iron acquisition and iron-requiring processes, such as synthesis and/or repair of Fe-S clusters in biosynthetic enzymes. The sequence is that of Probable Fe(2+)-trafficking protein from Thiobacillus denitrificans (strain ATCC 25259 / T1).